The primary structure comprises 348 residues: UDP-3-O-acylglucosamine N-acyltransferase (348 aa).

Catalysis depends on H241, which acts as the Proton acceptor.

It belongs to the transferase hexapeptide repeat family. LpxD subfamily. As to quaternary structure, homotrimer.

The catalysed reaction is a UDP-3-O-[(3R)-3-hydroxyacyl]-alpha-D-glucosamine + a (3R)-hydroxyacyl-[ACP] = a UDP-2-N,3-O-bis[(3R)-3-hydroxyacyl]-alpha-D-glucosamine + holo-[ACP] + H(+). The protein operates within bacterial outer membrane biogenesis; LPS lipid A biosynthesis. Its function is as follows. Catalyzes the N-acylation of UDP-3-O-acylglucosamine using 3-hydroxyacyl-ACP as the acyl donor. Is involved in the biosynthesis of lipid A, a phosphorylated glycolipid that anchors the lipopolysaccharide to the outer membrane of the cell. The polypeptide is UDP-3-O-acylglucosamine N-acyltransferase (Neisseria meningitidis serogroup B (strain ATCC BAA-335 / MC58)).